We begin with the raw amino-acid sequence, 215 residues long: Peroxiredoxin-5, mitochondrial (215 aa).

A mitochondrion-targeting transit peptide spans 1–53 (MGLAGVCVLRRSAGYILGGAAGQSVAATAAARRRSEGGWASGGVRSFSRAAAA). Positions 57–215 (IKVGDAIPAV…SLAPSIISQL (159 aa)) constitute a Thioredoxin domain. Lys76 is subject to N6-acetyllysine. The residue at position 84 (Lys84) is an N6-acetyllysine; alternate. Residue Lys84 is modified to N6-succinyllysine; alternate. Cys101 serves as the catalytic Cysteine sulfenic acid (-SOH) intermediate. Cys101 is lipidated: S-palmitoyl cysteine. Cysteines 101 and 205 form a disulfide. Lys117 is modified (N6-succinyllysine). Ser172 and Ser183 each carry phosphoserine. A Microbody targeting signal motif is present at residues 213-215 (SQL).

The protein belongs to the peroxiredoxin family. Prx5 subfamily. In terms of assembly, monomer. S-palmitoylated. Palmitoylation occurs on the active site, inhibiting its reactivity; therefore PRDX5 palmitoylation status determines its antioxidant capacity. Post-translationally, S-palmitoylated. Depalmitoylated by ABHD10.

It localises to the mitochondrion. The protein resides in the cytoplasm. Its subcellular location is the peroxisome matrix. It carries out the reaction a hydroperoxide + [thioredoxin]-dithiol = an alcohol + [thioredoxin]-disulfide + H2O. Its function is as follows. Thiol-specific peroxidase that catalyzes the reduction of hydrogen peroxide and organic hydroperoxides to water and alcohols, respectively. Plays a role in cell protection against oxidative stress by detoxifying peroxides and as sensor of hydrogen peroxide-mediated signaling events. The polypeptide is Peroxiredoxin-5, mitochondrial (PRDX5) (Papio hamadryas (Hamadryas baboon)).